The chain runs to 23 residues: Basic phospholipase A2 homolog Vur-S49 analog (23 aa).

The segment at 1–23 (SVLEIGLMLQEETEKNPKTSYSI) is disordered.

Post-translationally, contains 7 disulfide bonds. Expressed by the venom gland.

The protein resides in the secreted. This is Basic phospholipase A2 homolog Vur-S49 analog from Vipera renardi (Steppe viper).